Consider the following 152-residue polypeptide: Large ribosomal subunit protein uL22 (152 aa).

The protein belongs to the universal ribosomal protein uL22 family. As to quaternary structure, part of the 50S ribosomal subunit.

Functionally, this protein binds specifically to 23S rRNA. It makes multiple contacts with different domains of the 23S rRNA in the assembled 50S subunit and ribosome. The globular domain of the protein is located near the polypeptide exit tunnel on the outside of the subunit, while an extended beta-hairpin is found that lines the wall of the exit tunnel in the center of the 70S ribosome. This chain is Large ribosomal subunit protein uL22, found in Methanothrix thermoacetophila (strain DSM 6194 / JCM 14653 / NBRC 101360 / PT) (Methanosaeta thermophila).